We begin with the raw amino-acid sequence, 1108 residues long: Isoleucine--tRNA ligase (1108 aa).

The 'HIGH' region motif lies at 53 to 63 (PFANGLPHYGH). The 'KMSKS' region motif lies at 654–658 (KLSKR). Lysine 657 lines the ATP pocket.

This sequence belongs to the class-I aminoacyl-tRNA synthetase family. IleS type 2 subfamily. Monomer. It depends on Zn(2+) as a cofactor.

The protein resides in the cytoplasm. It carries out the reaction tRNA(Ile) + L-isoleucine + ATP = L-isoleucyl-tRNA(Ile) + AMP + diphosphate. Catalyzes the attachment of isoleucine to tRNA(Ile). As IleRS can inadvertently accommodate and process structurally similar amino acids such as valine, to avoid such errors it has two additional distinct tRNA(Ile)-dependent editing activities. One activity is designated as 'pretransfer' editing and involves the hydrolysis of activated Val-AMP. The other activity is designated 'posttransfer' editing and involves deacylation of mischarged Val-tRNA(Ile). This chain is Isoleucine--tRNA ligase, found in Rickettsia bellii (strain RML369-C).